A 291-amino-acid polypeptide reads, in one-letter code: GTPase Era (291 aa).

Positions 2–167 (KSGFVSIIGR…LDEIVKYLDE (166 aa)) constitute an Era-type G domain. The tract at residues 10-17 (GRTNAGKS) is G1. Position 10–17 (10–17 (GRTNAGKS)) interacts with GTP. The tract at residues 36 to 40 (NATRR) is G2. The G3 stretch occupies residues 57 to 60 (DTPG). Residues 57-61 (DTPGL) and 116-119 (NKVD) each bind GTP. The segment at 116 to 119 (NKVD) is G4. A G5 region spans residues 146–148 (YSS). The 89-residue stretch at 186–274 (YRDFILESIY…LLKLFVTVKK (89 aa)) folds into the KH type-2 domain.

The protein belongs to the TRAFAC class TrmE-Era-EngA-EngB-Septin-like GTPase superfamily. Era GTPase family. As to quaternary structure, monomer.

Its subcellular location is the cytoplasm. It is found in the cell inner membrane. An essential GTPase that binds both GDP and GTP, with rapid nucleotide exchange. Plays a role in 16S rRNA processing and 30S ribosomal subunit biogenesis and possibly also in cell cycle regulation and energy metabolism. The protein is GTPase Era of Campylobacter jejuni subsp. jejuni serotype O:23/36 (strain 81-176).